The chain runs to 84 residues: Acetylcholine receptor subunit alpha (84 aa).

Cysteines 7 and 21 form a disulfide. N-linked (GlcNAc...) asparagine glycosylation is found at Asn20 and Asn66. An intrachain disulfide couples Cys71 to Cys72.

Belongs to the ligand-gated ion channel (TC 1.A.9) family. Acetylcholine receptor (TC 1.A.9.1) subfamily. Alpha-1/CHRNA1 sub-subfamily. One of the alpha chains that assemble within the acetylcholine receptor, a pentamer of two alpha chains, a beta, a delta, and a gamma (in immature muscle) or epsilon (in mature muscle) chains. The muscle heteropentamer composed of alpha-1, beta-1, delta, epsilon subunits interacts with the alpha-conotoxin ImII.

Its subcellular location is the postsynaptic cell membrane. It is found in the cell membrane. It catalyses the reaction K(+)(in) = K(+)(out). The catalysed reaction is Na(+)(in) = Na(+)(out). Functionally, upon acetylcholine binding, the AChR responds by an extensive change in conformation that affects all subunits and leads to opening of an ion-conducting channel across the plasma membrane. The chain is Acetylcholine receptor subunit alpha (CHRNA1) from Herpestes ichneumon (Egyptian mongoose).